Here is a 105-residue protein sequence, read N- to C-terminus: Large ribosomal subunit protein uL24 (105 aa).

This sequence belongs to the universal ribosomal protein uL24 family. Part of the 50S ribosomal subunit.

Functionally, one of two assembly initiator proteins, it binds directly to the 5'-end of the 23S rRNA, where it nucleates assembly of the 50S subunit. In terms of biological role, one of the proteins that surrounds the polypeptide exit tunnel on the outside of the subunit. The protein is Large ribosomal subunit protein uL24 of Francisella philomiragia subsp. philomiragia (strain ATCC 25017 / CCUG 19701 / FSC 153 / O#319-036).